A 3456-amino-acid chain; its full sequence is MGKSKLTYKQCIAKWGKAALEAQNNGSRRSVSVGTHQIAANIFAFYDAKDYHLFAMGKRGGLTPAAEQLRIAIARGTIYKVQYNCHFCPDCDVIVDSEEGWFCEDCGSQFNKRDDNVLDNKNDVARALGGWNEYEDATWALFEAARADMLEVAPTVGQLEKEIRAIEKSAGKKLTAYEEEMLEELAYKLDVAKMNEEKQEEVLEETNFSISNDEFPALNGPQDEEVNVVIEETTEESAIEVAKEAEKSVEFEIIHEKTDEPISDAVNARMVATPVVATSVTKSGTVIDGKELVEKPKTTMWVTKPKTTAAIPATSSKSAVWVAKPKPASAIFIAEPVVKPAVRACNDVMNIGAMVCPIMVSANAQVEDATKEEEPVIKYNITFGSFNYEVSTKGERIQAAVQLDEIIEGPDIEPILICQTGSSHKSETKKAAKGLFVQDKFSVIGNKVLCKSFPAFNNFMNETRLGGIYRTRKGNYKNAALRLLKATKVQVFYDGIKDIFECPYCHVSSNELEGLNGDNCEKCKDLFYKHIDDPRKVEEEYLMVPLVPIDQHVHEEHSIISKAKWEAHESICEGEVNIVKIFDGKPTASKKKFKTMQAPNVANIPLDDFMQELVEICLERNTPIEIIGGVKSFNVVKLRHATRDISKSGEDDMYPTEREWFCHKNKLCLCGGIEREKKVRSFEVRPGWSGVILHKNQVAECDWDKFVFIDDICVVQGRNLITNKIENALEKKGATRLKQIQFYASSVVPNFKDEFDRASRLKADHEPYESSNNELIGRLARLVAAVIPKGHLYCKTCCLRVIKSKRADIVNALSKAKQRGERDEFIYDELIKLFELQAPPPYKIATITSDDDMFAHIRIGWKPYSGRLSLIMQHLQGLHTSISMLHQSLAGAQNDQQIDRQALHNQVRILHQRNEEHMPFLKKAVDEIQLLNATDQVANARELYLDTRATSTGDFDILRKYQSIYEFFPNIMSRANKVGMAVIKSETSLSKAFALMDNAKSMNAIHTLIGEDVIDNTSGACLMKNDKTFFSIGCKQGVDGSKMYGPLCPTKQHVRIHRVESNMQIPLPTFHDATVWEFNEGYCYANQLAIMVGFINEDEMEFYKNQMNQIVLNLGAWPTFEQYLVELRAISLDYPKVRGCPAAIHLVSHANKLIHVLGQFGTINQGWHALEVATVGELVDLCHKKVEGEMLTYKVGGIYDWVTKKNAFIDLFEHHPENIFKICTSPSVLWLFARSCEKHDFINDIMARDHSLVGLFIKLEYVGKHLHIFQSVDDVCVEYAASMREIIEEHADIHGLRDSVVDRMVHAYHNEVREANKYELVDRILEKNIGLIAKEISSRKLITMYHRDLFSWHEWQRLKLMPHSSNAQKLFEEANERAYGKQSWNLRVIWGACKEVLYAATHGVYVRVKGTTVRCADAVVYGFYGRTRAMVSSWASEAWGAIFTSCLRALVVMVVTAYISTWIPKIRKMIKREKKQFEDLGDGELYVEQHGKKEEAFLFKICAIFALIAGIVDYEWGAAACATMNKVRSICTVLGSVGIESHANEPNDKVEQDLKESLKFTSFEIEVPTWFYHNDMTFERWFQHQIQYGNVCADPIYSGPLRMLAITESSAREVAMNIRTSGETDVRVYSGVGGGKSTRLPKELSMFGHVLICVPTRVLAESLLTSFMVLFNMDVNVAYRGRIHTGNAPITIMTYGYALNFLVHKPMELNRYDYVLLDEINTNPVEFAPLFSFIKTTDPKKKIVKLSATHAGMDCECETRHKIKVETLSEMPIESWVSMQGSGVVGDATSVGDVILVFVASFKDVDTCANGLRSKGFKVLKVDSRNFRRDADVDKQIQSLGEGKKFIVATNIIENGVTFNIDVVVDFGEKISPNLSSDERCITLGRQRISRAERIQRFGRAGRIKPGTVLRFGRGNLVDALPSVLTATESALLCFAHGIKPVCDRVDVAAIGTLTRQQALVSGQFELNKLLVAHSATPSGQIPRVVYELFKPLLLRTDAVPICSSYNAIAACNWLPLSTYMRRNEKNEHVLATKIPWYCSDLSEDFNIKLAECVKSCMSTSNARFIVDNVNFITVAHKISVGEKTVGQAKLMVGELLENSKSWRDGLLHVQSSSVTRSLVGLCTSWYQRRAKAALDRLDLQVNRLQLLYDQLGQVEITSDYDKLVEFFTENGECAAYLESQSKTDFLEKHVLELRQPAITKNVVGTAMFAVALTGCLFWWWMKRNEKYEFIEQHGKKIRLNRDKRNACFVFSGTDDAMVEEYGVEYSQDVIHGRMSKAQKARQMKLKGKKPGSDTRVKPFKVLYGIDPNDYDTVALSAGGLTTEAVPVGEASLIDLMLELDDETGIFRKQVVNELKLKYTNNANGEQAMVRLTPHDSRRATIGSFMPSGFPDHHGEWRQTGAAEIIKEKNVAVDSHVGTPTVDAEDKHIASRLAIVRTHKGETHGIFHGDKLITPFHTFKNACGNDTLTVQSLRGLYDYGILSRQKMEQVPKQDIMVLVNPIDVTPFKQSQIFRPPIQCEVAYMIVCRRTPNGLRFEKTQETEIFPLGKQYGGVWKHGCDTRLGDCGGPIIACRDRKIVGFNGGRLMQMKYNTVLAHIFEPVNETFIEMLAKMEYAKGFWKFNPELVEWSRLLPTTTSFPIQKQIQGVESHGKPGDKCCGGNLISVGFANVTRISKHVIKGKRPSFVEYCNTYPDNIFMRDNLCEHYGPSILSKAAFYKDFTKYDDPVKVGRLDCYAFDTALAMVHDTLSQLGFHGNSGSQWDIAEIFDDLNKKSSMGALYSGKKGQWMHGLTPEDAISLAVESYALLNSGHLGVWSGSLKAELRHVDKLKEGKTRVFTGAPIDTLLAGKILVDNFNNYFYKCHLQGPWTVGINKFNRGWNKLANYFNHDWVFIDCDGSRFDSSIPPIMFNAVCMLRSVFGDLDPDENQTLSNLYTEIVNTPILTIEGNIIRKFRGNNSGQPSTVVDNTLILMIAMEYAIAKVFVTRPDIKYVCNGDDLLINCPRSTANAISEHFKDVFADLSLNYDFDHVCDKITDVDFMSHSFMWLDTEQMYIPKLDKERIVAILEWERSDEQFRTRSALNAAYIESFGYEDLMTEIEKFAHFWAKKHGLNDVLMEREKVRSLYVDENFDASRFEKFYPESFSPFDVYVEPHASTSKTIEELQQEMEDLDSDTTITVVQRETQKAGIRDQIEALRAQQIVRPPEAQLQPDVTPAQIVTFEPPRVTGFGALWIPRQQRNYMTPSYIEKIKAYVPHSNLIESGLASEAQLTSWFENTCRDYQVSMDVFMSTILPAWIVNCIINGTSQERTNEHTWRAVIMANMEDQEVLYYPIKPIIINAQPTLRQVMRHFGEQAVAQYMNSLQVGKPFTVKGAVTAGYANVQDAWLGIDFLRDTMKLTTKQMEVKHQIIAANVTRRKIRVFALAAPGDGDELDTERHVVDDVARGRHSLRGAQLD.

A Peptidase S30 domain is found at 600–743 (NVANIPLDDF…ATRLKQIQFY (144 aa)). Active-site for P1 proteinase activity residues include histidine 640, aspartate 652, and serine 689. The Peptidase C6 domain occupies 1075-1196 (VWEFNEGYCY…EGEMLTYKVG (122 aa)). Cysteine 1083 functions as the For helper component proteinase activity in the catalytic mechanism. An HAT 1 repeat occupies 1094–1126 (FINEDEMEFYKNQMNQIVLNLGAWPTFEQYLVE). The active-site For helper component proteinase activity is the histidine 1155. Positions 1617–1768 (NIRTSGETDV…TRHKIKVETL (152 aa)) constitute a Helicase ATP-binding domain. 1630–1637 (SGVGGGKS) serves as a coordination point for ATP. In terms of domain architecture, Helicase C-terminal spans 1787–1947 (DATSVGDVIL…GIKPVCDRVD (161 aa)). Tyrosine 2304 is subject to O-(5'-phospho-RNA)-tyrosine. A Peptidase C4 domain is found at 2412–2636 (AVDSHVGTPT…VEWSRLLPTT (225 aa)). Active-site for nuclear inclusion protein A activity residues include histidine 2457, aspartate 2494, and cysteine 2566. Residues 2597 to 2629 (HIFEPVNETFIEMLAKMEYAKGFWKFNPELVEW) form an HAT 2 repeat. Positions 2891 to 3011 (WVFIDCDGSR…NCPRSTANAI (121 aa)) constitute a RdRp catalytic domain. One copy of the HAT 3 repeat lies at 3082-3115 (LNAAYIESFGYEDLMTEIEKFAHFWAKKHGLNDV).

In terms of processing, VPg is uridylylated by the polymerase and is covalently attached to the 5'-end of the genomic RNA. This uridylylated form acts as a nucleotide-peptide primer for the polymerase. Genome polyprotein of potyviruses undergoes post-translational proteolytic processing by the main proteinase NIa-pro resulting in the production of at least ten individual proteins. The P1 proteinase and the HC-pro cleave only their respective C-termini autocatalytically. 6K1 is essential for proper proteolytic separation of P3 from CI.

The protein resides in the host cytoplasmic vesicle. Its subcellular location is the virion. The catalysed reaction is RNA(n) + a ribonucleoside 5'-triphosphate = RNA(n+1) + diphosphate. The enzyme catalyses Hydrolyzes glutaminyl bonds, and activity is further restricted by preferences for the amino acids in P6 - P1' that vary with the species of potyvirus, e.g. Glu-Xaa-Xaa-Tyr-Xaa-Gln-|-(Ser or Gly) for the enzyme from tobacco etch virus. The natural substrate is the viral polyprotein, but other proteins and oligopeptides containing the appropriate consensus sequence are also cleaved.. It carries out the reaction Hydrolyzes a Gly-|-Gly bond at its own C-terminus, commonly in the sequence -Tyr-Xaa-Val-Gly-|-Gly, in the processing of the potyviral polyprotein.. Required for aphid transmission and also has proteolytic activity. Only cleaves a Gly-Gly dipeptide at its own C-terminus. Interacts with virions and aphid stylets. Acts as a suppressor of RNA-mediated gene silencing, also known as post-transcriptional gene silencing (PTGS), a mechanism of plant viral defense that limits the accumulation of viral RNAs. May have RNA-binding activity. In terms of biological role, has helicase activity. It may be involved in replication. Its function is as follows. Indispensable for virus replication. Functionally, mediates the cap-independent, EIF4E-dependent translation of viral genomic RNAs. Binds to the cap-binding site of host EIF4E and thus interferes with the host EIF4E-dependent mRNA export and translation. VPg-RNA directly binds EIF4E and is a template for transcription. Also forms trimeric complexes with EIF4E-EIF4G, which are templates for translation. Has RNA-binding and proteolytic activities. In terms of biological role, an RNA-dependent RNA polymerase that plays an essential role in the virus replication. Its function is as follows. Involved in aphid transmission, cell-to-cell and systemis movement, encapsidation of the viral RNA and in the regulation of viral RNA amplification. The polypeptide is Genome polyprotein (Sweet potato mild mottle virus (isolate Salazar) (SPMMV)).